The following is an 828-amino-acid chain: Glycerol-3-phosphate acyltransferase (828 aa).

The HXXXXD motif signature appears at 304–309 (CHRSHM). The tract at residues 802-828 (SMPAETSNQPEAPETPETPEPEGKTES) is disordered.

The protein belongs to the GPAT/DAPAT family.

It localises to the cell inner membrane. It carries out the reaction sn-glycerol 3-phosphate + an acyl-CoA = a 1-acyl-sn-glycero-3-phosphate + CoA. The protein operates within phospholipid metabolism; CDP-diacylglycerol biosynthesis; CDP-diacylglycerol from sn-glycerol 3-phosphate: step 1/3. The polypeptide is Glycerol-3-phosphate acyltransferase (Yersinia pseudotuberculosis serotype O:3 (strain YPIII)).